A 241-amino-acid chain; its full sequence is tRNA pseudouridine synthase B (241 aa).

The Nucleophile role is filled by D45.

This sequence belongs to the pseudouridine synthase TruB family. Type 1 subfamily.

It catalyses the reaction uridine(55) in tRNA = pseudouridine(55) in tRNA. Its function is as follows. Responsible for synthesis of pseudouridine from uracil-55 in the psi GC loop of transfer RNAs. In Chlamydia trachomatis serovar L2 (strain ATCC VR-902B / DSM 19102 / 434/Bu), this protein is tRNA pseudouridine synthase B.